Consider the following 317-residue polypeptide: Melanocyte-stimulating hormone receptor (317 aa).

Residues 1-37 (MPVQGSQRRLLGSLNSTPTAPPHLGLAANQTGARCLE) are Extracellular-facing. A glycan (N-linked (GlcNAc...) asparagine) is linked at Asn-29. Residues 38–63 (VSIPDGLFLSLGLVSLVENVLVVTAI) form a helical membrane-spanning segment. Residues 64–72 (AKNRNLHSP) lie on the Cytoplasmic side of the membrane. A helical transmembrane segment spans residues 73–93 (MYCFICCLALSDLLVSGSNML). Residues 94-118 (ETAVILLLEAGALAARAAVVQQLDN) lie on the Extracellular side of the membrane. A helical transmembrane segment spans residues 119-140 (VIDVITCSSMLSSLCFLGAIAV). Topologically, residues 141–163 (DRYISIFYALRYHSIVTLPRARR) are cytoplasmic. The chain crosses the membrane as a helical span at residues 164–183 (AVAAIWVASVLFSMLFIAYY). The Extracellular portion of the chain corresponds to 184–191 (DHAAVLLC). A helical transmembrane segment spans residues 192–211 (LVVFFLAMLVLMAVLYIHML). Topologically, residues 212-240 (VRACQHAQGIARLHKRQRPAHQGFGLKGA) are cytoplasmic. Residues 241–266 (ATLTILLGIFFLCWGPFFLHLTLIVL) traverse the membrane as a helical segment. At 267 to 279 (CPQHPTCSCIFKN) the chain is on the extracellular side. The chain crosses the membrane as a helical span at residues 280–300 (FNLFLALIICNAIIDPLIYAF). Over 301-317 (RSQELRRTLKEVLLCSW) the chain is Cytoplasmic. The S-palmitoyl cysteine moiety is linked to residue Cys-315.

Belongs to the G-protein coupled receptor 1 family. As to quaternary structure, interacts with MGRN1, but does not undergo MGRN1-mediated ubiquitination; this interaction competes with GNAS-binding and thus inhibits agonist-induced cAMP production. Interacts with OPN3; the interaction results in a decrease in MC1R-mediated cAMP signaling and ultimately a decrease in melanin production in melanocytes.

It localises to the cell membrane. Receptor for MSH (alpha, beta and gamma) and ACTH. The activity of this receptor is mediated by G proteins which activate adenylate cyclase. Mediates melanogenesis, the production of eumelanin (black/brown) and phaeomelanin (red/yellow), via regulation of cAMP signaling in melanocytes. This chain is Melanocyte-stimulating hormone receptor (MC1R), found in Cercopithecus diana (Diana monkey).